The sequence spans 296 residues: Putative peptide transport system permease protein BruAb2_1032 (296 aa).

6 helical membrane passes run 35–55 (IGLV…WITN), 97–117 (LWIG…IGIA), 131–151 (VMDA…SAAL), 205–225 (ILPN…AYAI), 229–249 (ATLS…GSIV), and 260–280 (WWIM…INLI). Residues 97–281 (LWIGLTVAVL…ISALAINLIG (185 aa)) form the ABC transmembrane type-1 domain.

It belongs to the binding-protein-dependent transport system permease family. As to quaternary structure, the complex is composed of two ATP-binding proteins (BruAb2_1033 and BruAb2_1034), two transmembrane proteins (BruAb2_1031 and BruAb2_1032) and a solute-binding protein (BruAb2_1030).

It is found in the cell inner membrane. Its function is as follows. Probably part of an ABC transporter complex that could be involved in peptide import. Probably responsible for the translocation of the substrate across the membrane. The chain is Putative peptide transport system permease protein BruAb2_1032 from Brucella abortus biovar 1 (strain 9-941).